The primary structure comprises 272 residues: uncharacterized protein (272 aa).

This is an uncharacterized protein from Bacillus anthracis.